The chain runs to 99 residues: Putative protein tag-209 (99 aa).

Positions 1 to 16 (MLKLLAFVALLSVSVS) are cleaved as a signal peptide.

This is Putative protein tag-209 (tag-209) from Caenorhabditis elegans.